The chain runs to 843 residues: Protein piwi (843 aa).

A Nuclear localization signal motif is present at residues 1–12 (MADDQGRGRRRP). The interval 1–76 (MADDQGRGRR…TERKPWGDQY (76 aa)) is disordered. The tract at residues 1-257 (MADDQGRGRR…ILLGTEITHK (257 aa)) is interaction with CBX5 and papi. A symmetric dimethylarginine mark is found at arginine 7, arginine 9, arginine 10, and arginine 11. A compositionally biased stretch (basic and acidic residues) spans 41–72 (PRADPRIEASRERRALEEAPRREGGPTERKPW). A PAZ domain is found at 263–372 (TIYDIMRRCS…LIPELCRVTG (110 aa)). The Piwi domain maps to 538 to 829 (LILCLVPNDN…LATLVGTNLH (292 aa)). Glutamine 589 contributes to the Mg(2+) binding site. Catalysis depends on residues aspartate 614 and aspartate 685. Leucine 843 is a binding site for Mg(2+).

The protein belongs to the argonaute family. Piwi subfamily. In the ovaries, part of a complex composed of at least Panx, nxf2, piwi and Nxt1. The complex is knowns as Panx-induced co-transcriptional silencing (PICTS) complex, Panx-nxf2-dependent TAP/p15 silencing (Pandas complex), SFiNX (silencing factor interacting nuclear export variant) or piwi-Panx-nxf2-p15 (PPNP) complex. Interacts with vas; this interaction is RNA-independent. Interacts with Dcr-1 and Fmr1; these interactions occur in polar granules. Interacts (via N-terminal region) with CBX5 (via chromoshadow domain). Forms a complex with Hsp83 and Hop; probably Hop mediates the interaction between piwi and Hsp83. Forms a complex with Yb body components armi and fs(1)Yb; this interaction is required for proper piRNA loading and nuclear localization of piwi. Interaction of Piwi and fs(1)Yb is likely to occur via armi. Interacts (via the N-terminal region when unmethylated or symmetrically methylated at Arg-10) with papi (via Tudor domain). Interacts with vret. Interacts with Panx. Interacts with arx. Interacts with Tudor-SN. Interacts with Nup358 (via N-terminus). Associates with the nuclear pore complex via interaction with Elys. Interacts with thoc5; the interaction might be partly RNA-mediated. Interacts with xmas-2. Post-translationally, symmetrically dimethylated, most likely by csul. Methylation at Arg-10 enhances binding to papi whereas methylation at Arg-7, Arg-9 or Arg-11 reduces binding affinity to papi. Phosphorylated on serine and tyrosine residues in an Hsp83-dependent manner. In terms of tissue distribution, expressed in ovaries (at protein level). Expressed somatically in ovariole terminal filament cells, epithelial sheath cells, cap cells and follicle cells (at protein level). Expressed in nurse cells and oocytes in developing egg chambers (at protein level). In embryos, accumulates in pole cells (at protein level). In larval and adult testis, expressed in a germinal proliferative center at the apical tip containing somatic hub cells and mitotically dividing germ stem cells (at protein level).

It is found in the cytoplasm. The protein resides in the nucleus. The protein localises to the nucleoplasm. Its subcellular location is the chromosome. In terms of biological role, acts via the piwi-interacting RNA (piRNA) metabolic process, which mediates the repression of transposable elements during meiosis by forming complexes composed of piRNAs and Piwi proteins and governs the methylation and subsequent repression of transposons. Directly binds piRNAs, a class of 24 to 30 nucleotide RNAs that are generated by a Dicer-independent mechanism and are primarily derived from transposons and other repeated sequence elements. In ovarian somatic cells, mediates silencing of transposable elements at the transcriptional level in a mael-dependent manner. Involved in silencing of long terminal repeat (LTR) retrotransposons in male germline. In testis, regulates spermatogenesis together with Tudor-SN. In germ cells, mediates silencing at both transcriptional and post-transcriptional levels and is involved in the maintenance of populations of primary and secondary piRNAs. Piwi-mediated transcriptional silencing is accompanied by the formation of His3 trimethylated on 'Lys-10' (H3K9me3) associated euchromatin and heterochromatin. In ovary, associates predominantly with antisense piRNAs that contain uridine at their 5' end. Association with sense piRNAs is also observed but to a lesser extent. Mediates a somatic signaling mechanism required for the maintenance of germline stem cells to produce and maintain a daughter germline stem cell. It is not essential for the further differentiation of the committed daughter cell. Acts cell autonomously to promote germline stem cell division. Its role in stem cell maintenance does not seem to require nuclear localization. Required maternally for the posterior localization of osk and vas and for pole cell formation during oogenesis and early embryogenesis. Together with Hop and Hsp83, mediates canalization, also known as developmental robustness, likely via epigenetic silencing of existing genetic variants and suppression of transposon-induced new genetic variation. Shows RNA cleavage activity, although is not required for any of its known functions. In the ovaries, forms a complex with nxf2, Panx and Nxt1 which acts as effectors of cotranscriptional transposon silencing. The sequence is that of Protein piwi from Drosophila melanogaster (Fruit fly).